The primary structure comprises 484 residues: RuvB-like helicase 1 (484 aa).

Residues 1–11 (MSMAASSSTAT) are compositionally biased toward low complexity. Positions 1 to 27 (MSMAASSSTATVQPSGIITQPPPPSTL) are disordered. 87-94 (GPPGTGKT) lines the ATP pocket.

The protein belongs to the RuvB family. May form heterododecamers with RVB2. Component of the SWR1 chromatin remodeling complex, the INO80 chromatin remodeling complex, and of the R2TP complex.

The protein localises to the nucleus. The catalysed reaction is ATP + H2O = ADP + phosphate + H(+). In terms of biological role, DNA helicase which participates in several chromatin remodeling complexes, including the SWR1 and the INO80 complexes. The SWR1 complex mediates the ATP-dependent exchange of histone H2A for the H2A variant HZT1 leading to transcriptional regulation of selected genes by chromatin remodeling. The INO80 complex remodels chromatin by shifting nucleosomes and is involved in DNA repair. Also involved in pre-rRNA processing. This is RuvB-like helicase 1 (RVB1) from Cryptococcus neoformans var. neoformans serotype D (strain B-3501A) (Filobasidiella neoformans).